A 303-amino-acid chain; its full sequence is Probable cell division protein WhiA (303 aa).

Residues 272-303 (SLQQIADSLDFAITKSGVNHRLRKINKLAEDL) constitute a DNA-binding region (H-T-H motif).

This sequence belongs to the WhiA family.

Involved in cell division and chromosome segregation. This is Probable cell division protein WhiA from Streptococcus equi subsp. zooepidemicus (strain MGCS10565).